Here is a 574-residue protein sequence, read N- to C-terminus: Sulfate adenylyltransferase (574 aa).

Positions Met-1–Tyr-169 are N-terminal. A catalytic region spans residues Asp-170–Thr-394. Gln-197 contributes to the sulfate binding site. ATP-binding positions include Gln-197–Asn-200 and Gly-291–His-294. Catalysis depends on residues Thr-198, Arg-199, and Asn-200. Arg-199 contributes to the sulfate binding site. Ala-295 is a binding site for sulfate. ATP is bound at residue Val-333. The interval Gln-395–Leu-574 is allosteric regulation domain; adenylyl-sulfate kinase-like. Residues Asp-434–Arg-437, Arg-451, Ile-477–Ala-478, and Arg-516 contribute to the 3'-phosphoadenylyl sulfate site.

It in the N-terminal section; belongs to the sulfate adenylyltransferase family. In the C-terminal section; belongs to the APS kinase family. In terms of assembly, homohexamer. Dimer of trimers.

It localises to the cytoplasm. It catalyses the reaction sulfate + ATP + H(+) = adenosine 5'-phosphosulfate + diphosphate. It functions in the pathway sulfur metabolism; hydrogen sulfide biosynthesis; sulfite from sulfate: step 1/3. Allosterically inhibited by 3'-phosphoadenosine 5'-phosphosulfate (PAPS). Functionally, catalyzes the first intracellular reaction of sulfate assimilation, forming adenosine-5'-phosphosulfate (APS) from inorganic sulfate and ATP. Plays an important role in sulfate activation as a component of the biosynthesis pathway of sulfur-containing amino acids. The protein is Sulfate adenylyltransferase of Aspergillus terreus (strain NIH 2624 / FGSC A1156).